The primary structure comprises 1170 residues: Probable mRNA-capping enzyme (1170 aa).

Catalysis depends on lysine 292, which acts as the N6-GMP-lysine intermediate. In terms of domain architecture, mRNA cap 0 methyltransferase spans 684 to 1007 (SNAAGMRAFN…LNRYYVFRKT (324 aa)). Residue 693-694 (NN) coordinates mRNA. S-adenosyl-L-methionine is bound by residues lysine 697, glycine 715, aspartate 737, and 813–815 (QFT).

This sequence in the N-terminal section; belongs to the dsDNA virus mRNA guanylyltransferase family. In the C-terminal section; belongs to the class I-like SAM-binding methyltransferase superfamily. mRNA cap 0 methyltransferase family.

It is found in the virion. It carries out the reaction a 5'-end triphospho-ribonucleoside in mRNA + H2O = a 5'-end diphospho-ribonucleoside in mRNA + phosphate + H(+). The enzyme catalyses a 5'-end diphospho-ribonucleoside in mRNA + GTP + H(+) = a 5'-end (5'-triphosphoguanosine)-ribonucleoside in mRNA + diphosphate. The catalysed reaction is a 5'-end (5'-triphosphoguanosine)-ribonucleoside in mRNA + S-adenosyl-L-methionine = a 5'-end (N(7)-methyl 5'-triphosphoguanosine)-ribonucleoside in mRNA + S-adenosyl-L-homocysteine. It participates in mRNA processing; mRNA capping. Responsible for methylating the 5'-cap structure of mRNAs. This Acanthamoeba polyphaga mimivirus (APMV) protein is Probable mRNA-capping enzyme.